A 206-amino-acid polypeptide reads, in one-letter code: Methyl-coenzyme M reductase operon protein C (206 aa).

As to quaternary structure, MCR is composed of three subunits: alpha, beta, and gamma. The function of proteins C and D is not known.

This Methanosarcina barkeri (strain Fusaro / DSM 804) protein is Methyl-coenzyme M reductase operon protein C (mcrC).